Reading from the N-terminus, the 559-residue chain is NXPE family member 2 (559 aa).

The chain crosses the membrane as a helical span at residues 17–37; sequence AIARKLLLMLTFILIFWIIYL.

This sequence belongs to the NXPE family.

It localises to the membrane. This Homo sapiens (Human) protein is NXPE family member 2 (NXPE2).